Here is a 104-residue protein sequence, read N- to C-terminus: L-rhamnose mutarotase (104 aa).

Residue Y18 coordinates substrate. H22 serves as the catalytic Proton donor. Residues Y41 and 76 to 77 contribute to the substrate site; that span reads WW.

Belongs to the rhamnose mutarotase family. Homodimer.

It localises to the cytoplasm. The enzyme catalyses alpha-L-rhamnose = beta-L-rhamnose. It participates in carbohydrate metabolism; L-rhamnose metabolism. Involved in the anomeric conversion of L-rhamnose. The sequence is that of L-rhamnose mutarotase from Shigella dysenteriae serotype 1 (strain Sd197).